We begin with the raw amino-acid sequence, 430 residues long: D-galactonate transporter (430 aa).

Topologically, residues 1–17 are cytoplasmic; it reads MDIPVNAAKPGRRRYLT. A helical transmembrane segment spans residues 18-39; that stretch reads LVMIFITVVICYVDRANLAVAS. Residues Tyr-29 and Arg-32 each coordinate D-galactonate. The Periplasmic segment spans residues 40-50; sequence AHIQEEFGITK. Residues 51–74 form a helical membrane-spanning segment; it reads AEMGYVFSAFAWLYTLCQIPGGWF. D-galactonate is bound at residue Tyr-64. Residues 75 to 81 lie on the Cytoplasmic side of the membrane; the sequence is LDRVGSR. Residues 82-100 traverse the membrane as a helical segment; sequence VTYFIAIFGWSVATLFQGF. Residues 101–103 are Periplasmic-facing; that stretch reads ATG. A helical transmembrane segment spans residues 104–125; the sequence is LMSLIGLRAITGIFEAPAFPTN. Residues 126 to 141 lie on the Cytoplasmic side of the membrane; that stretch reads NRMVTSWFPEHERASA. Residues 142-164 traverse the membrane as a helical segment; sequence VGFYTSGQFVGLAFLTPLLIWIQ. Over 165–168 the chain is Periplasmic; that stretch reads EMLS. The chain crosses the membrane as a helical span at residues 169-190; it reads WHWVFIVTGGIGIIWSLIWFKV. Residues 191 to 241 are Cytoplasmic-facing; the sequence is YQPPRLTKGISKAELDYIRDGGGLVDGDAPVKKEARQPLTAKDWKLVFHRK. The chain crosses the membrane as a helical span at residues 242–267; the sequence is LIGVYLGQFAVASTLWFFLTWFPNYL. At 268 to 276 the chain is on the periplasmic side; sequence TQEKGITAL. A helical membrane pass occupies residues 277–297; that stretch reads KAGFMTTVPFLAAFVGVLLSG. At 298 to 314 the chain is on the cytoplasmic side; that stretch reads WVADLLVRKGFSLGFAR. Residues 315–333 traverse the membrane as a helical segment; sequence KTPIICGLLISTCIMGANY. At 334-336 the chain is on the periplasmic side; sequence TND. A helical membrane pass occupies residues 337–354; it reads PMMIMCLMALAFFGNGFA. Residues 355 to 373 lie on the Cytoplasmic side of the membrane; the sequence is SITWSLVSSLAPMRLIGLT. Residue Trp-358 participates in D-galactonate binding. Residues 374-395 traverse the membrane as a helical segment; it reads GGVFNFAGGLGGITVPLVVGYL. Topologically, residues 396–400 are periplasmic; sequence AQGYG. The helical transmembrane segment at 401–423 threads the bilayer; the sequence is FAPALVYISAVALIGALSYILLV. The Cytoplasmic portion of the chain corresponds to 424 to 430; it reads GDVKRVG.

The protein belongs to the major facilitator superfamily. Phthalate permease family.

Its subcellular location is the cell inner membrane. The enzyme catalyses D-galactonate(in) + H(+)(in) = D-galactonate(out) + H(+)(out). Involved in D-galactonate metabolism. Catalyzes the proton-dependent uptake of galactonate into the cell. The protein is D-galactonate transporter (dgoT) of Escherichia coli O6:H1 (strain CFT073 / ATCC 700928 / UPEC).